We begin with the raw amino-acid sequence, 532 residues long: Cytokinin dehydrogenase 1 (532 aa).

Residues 1–17 (MAAIYLLIAALIASSHA) form the signal peptide. N-linked (GlcNAc...) asparagine glycans are attached at residues Asn52 and Asn63. An FAD-binding PCMH-type domain is found at 65 to 244 (TAALPAAVLF…TRARVAVEPA (180 aa)). Positions 100, 102, 103, and 104 each coordinate FAD. His105 is modified (pros-8alpha-FAD histidine). Residues Ser106 and Gln110 each contribute to the FAD site. N-linked (GlcNAc...) asparagine glycosylation is present at Asn133. Positions 168, 173, 179, 183, and 234 each coordinate FAD. Asn321 and Asn432 each carry an N-linked (GlcNAc...) asparagine glycan. 3 residues coordinate FAD: Tyr490, Ser525, and Gln528.

It belongs to the oxygen-dependent FAD-linked oxidoreductase family. In terms of assembly, monomer. FAD is required as a cofactor.

It localises to the secreted. The protein localises to the extracellular space. The enzyme catalyses N(6)-dimethylallyladenine + A + H2O = 3-methyl-2-butenal + adenine + AH2. In terms of biological role, catalyzes the oxidation of cytokinins, a family of N(6)-substituted adenine derivatives that are plant hormones, where the substituent is an isopentenyl group. The chain is Cytokinin dehydrogenase 1 (CKX1) from Oryza sativa subsp. japonica (Rice).